We begin with the raw amino-acid sequence, 667 residues long: UvrABC system protein C (667 aa).

Residues 43 to 122 (AEPGCYLMRD…IKNQQPHFNV (80 aa)) enclose the GIY-YIG domain. The UVR domain occupies 232 to 267 (QELKVLLEKQMERYSDRMDYESAANIRDQIKGLEQL).

Belongs to the UvrC family. As to quaternary structure, interacts with UvrB in an incision complex.

It localises to the cytoplasm. The UvrABC repair system catalyzes the recognition and processing of DNA lesions. UvrC both incises the 5' and 3' sides of the lesion. The N-terminal half is responsible for the 3' incision and the C-terminal half is responsible for the 5' incision. This Prochlorococcus marinus (strain MIT 9313) protein is UvrABC system protein C.